The chain runs to 476 residues: Bifunctional protein HldE (476 aa).

The ribokinase stretch occupies residues 1-318; it reads MKLDLTVLEQ…YTALHGDKLA (318 aa). 195 to 198 serves as a coordination point for ATP; the sequence is NLGE. Residue Asp264 is part of the active site. Residues 344–476 are cytidylyltransferase; that stretch reads MTNGCFDILH…MIDTILDREG (133 aa).

The protein in the N-terminal section; belongs to the carbohydrate kinase PfkB family. It in the C-terminal section; belongs to the cytidylyltransferase family. As to quaternary structure, homodimer.

The catalysed reaction is D-glycero-beta-D-manno-heptose 7-phosphate + ATP = D-glycero-beta-D-manno-heptose 1,7-bisphosphate + ADP + H(+). It catalyses the reaction D-glycero-beta-D-manno-heptose 1-phosphate + ATP + H(+) = ADP-D-glycero-beta-D-manno-heptose + diphosphate. The protein operates within nucleotide-sugar biosynthesis; ADP-L-glycero-beta-D-manno-heptose biosynthesis; ADP-L-glycero-beta-D-manno-heptose from D-glycero-beta-D-manno-heptose 7-phosphate: step 1/4. It functions in the pathway nucleotide-sugar biosynthesis; ADP-L-glycero-beta-D-manno-heptose biosynthesis; ADP-L-glycero-beta-D-manno-heptose from D-glycero-beta-D-manno-heptose 7-phosphate: step 3/4. Functionally, catalyzes the phosphorylation of D-glycero-D-manno-heptose 7-phosphate at the C-1 position to selectively form D-glycero-beta-D-manno-heptose-1,7-bisphosphate. Its function is as follows. Catalyzes the ADP transfer from ATP to D-glycero-beta-D-manno-heptose 1-phosphate, yielding ADP-D-glycero-beta-D-manno-heptose. The polypeptide is Bifunctional protein HldE (Chromohalobacter salexigens (strain ATCC BAA-138 / DSM 3043 / CIP 106854 / NCIMB 13768 / 1H11)).